The following is a 349-amino-acid chain: Anthranilate phosphoribosyltransferase (349 aa).

Residues Gly-82, 85 to 86 (GD), 92 to 95 (NVST), 110 to 118 (KHGNRAVSG), and Ser-122 contribute to the 5-phospho-alpha-D-ribose 1-diphosphate site. Gly-82 serves as a coordination point for anthranilate. Ser-94 contributes to the Mg(2+) binding site. Asn-113 is a binding site for anthranilate. Arg-168 serves as a coordination point for anthranilate. Asp-227 and Glu-228 together coordinate Mg(2+).

It belongs to the anthranilate phosphoribosyltransferase family. In terms of assembly, homodimer. Requires Mg(2+) as cofactor.

It catalyses the reaction N-(5-phospho-beta-D-ribosyl)anthranilate + diphosphate = 5-phospho-alpha-D-ribose 1-diphosphate + anthranilate. The protein operates within amino-acid biosynthesis; L-tryptophan biosynthesis; L-tryptophan from chorismate: step 2/5. Its function is as follows. Catalyzes the transfer of the phosphoribosyl group of 5-phosphorylribose-1-pyrophosphate (PRPP) to anthranilate to yield N-(5'-phosphoribosyl)-anthranilate (PRA). In Pseudomonas putida (strain ATCC 700007 / DSM 6899 / JCM 31910 / BCRC 17059 / LMG 24140 / F1), this protein is Anthranilate phosphoribosyltransferase.